We begin with the raw amino-acid sequence, 334 residues long: WD repeat domain 54 (334 aa).

WD repeat units lie at residues 162–206, 208–247, and 250–289; these read GHQT…TLLT, IAGF…LHIQ, and AHAR…ESGS.

As to quaternary structure, homodimer and homotrimer; forms tight forms of dimers and trimers. Interacts with IZUMO1 and IZUMO1R/JUNO. Cross-linked to tightly form both dimers and trimers by TGM2. Cross-linking enhances the activation of EGF receptor-mediated signaling pathway. Cross-linking is inhibited by EGF. Post-translationally, ubiquitinated. EGF increases ubiquitination. Widely expressed in the ovary and testis (at protein level).

It is found in the vesicle. It localises to the cytoplasm. Its subcellular location is the cell membrane. In terms of biological role, plays a role in the adhesion and fusion of the sperm-oocyte membrane through its interactions with IZUMO1 and IZUMO1R/JUNO. When cross-linked to form dimers and trimers, it has a regulatory effect on ERK signaling pathway activity in response to EGF stimulation. Colocalizes with the EGF receptor in WDR54-specific vesicle where it sustains the internalization and controls the degradation of the EGF receptor after EGF stimulation. The chain is WD repeat domain 54 (Wdr54) from Rattus norvegicus (Rat).